A 289-amino-acid chain; its full sequence is Thymidylate synthase (289 aa).

DUMP contacts are provided by residues arginine 21 and 150–151 (RR). Residue cysteine 170 is the Nucleophile of the active site. Residues 191–194 (RSAD), asparagine 202, and 232–234 (HIY) contribute to the dUMP site. Aspartate 194 serves as a coordination point for (6R)-5,10-methylene-5,6,7,8-tetrahydrofolate. Alanine 288 is a (6R)-5,10-methylene-5,6,7,8-tetrahydrofolate binding site.

The protein belongs to the thymidylate synthase family. Bacterial-type ThyA subfamily. Homodimer.

Its subcellular location is the cytoplasm. The enzyme catalyses dUMP + (6R)-5,10-methylene-5,6,7,8-tetrahydrofolate = 7,8-dihydrofolate + dTMP. It functions in the pathway pyrimidine metabolism; dTTP biosynthesis. Functionally, catalyzes the reductive methylation of 2'-deoxyuridine-5'-monophosphate (dUMP) to 2'-deoxythymidine-5'-monophosphate (dTMP) while utilizing 5,10-methylenetetrahydrofolate (mTHF) as the methyl donor and reductant in the reaction, yielding dihydrofolate (DHF) as a by-product. This enzymatic reaction provides an intracellular de novo source of dTMP, an essential precursor for DNA biosynthesis. This Malacoplasma penetrans (strain HF-2) (Mycoplasma penetrans) protein is Thymidylate synthase.